The following is a 520-amino-acid chain: Cytochrome b5 reductase 4 (520 aa).

Met1 bears the N-acetylmethionine mark. The segment at 1 to 27 is disordered; it reads MLNVPSQAFPAPGSQQRVASQGRSKVP. Polar residues predominate over residues 13–23; it reads GSQQRVASQGR. In terms of domain architecture, Cytochrome b5 heme-binding spans 54–130; sequence LIEVTEEELK…LKECLVGRMA (77 aa). Residues His89 and His112 each contribute to the heme site. In terms of domain architecture, CS spans 164–255; sequence PSSPSYDWFQ…KETVSWKCLG (92 aa). The region spanning 272–384 is the FAD-binding FR-type domain; it reads LYYRQCQLIS…SGPEGNFKVS (113 aa). Residues 364–379 and 391–423 each bind FAD; these read DRLQ…GPEG and DLFL…KVKL.

It belongs to the flavoprotein pyridine nucleotide cytochrome reductase family. It depends on FAD as a cofactor. As to expression, isoform 2 is expressed in testis, brain, skeletal muscle and in the male germline.

The protein resides in the endoplasmic reticulum. It carries out the reaction 2 Fe(III)-[cytochrome b5] + NADH = 2 Fe(II)-[cytochrome b5] + NAD(+) + H(+). NADH-cytochrome b5 reductase involved in endoplasmic reticulum stress response pathway. Plays a critical role in protecting pancreatic beta-cells against oxidant stress, possibly by protecting the cell from excess buildup of reactive oxygen species (ROS). In Rattus norvegicus (Rat), this protein is Cytochrome b5 reductase 4 (Cyb5r4).